An 88-amino-acid chain; its full sequence is Small ribosomal subunit protein uS17 (88 aa).

This sequence belongs to the universal ribosomal protein uS17 family. Part of the 30S ribosomal subunit.

In terms of biological role, one of the primary rRNA binding proteins, it binds specifically to the 5'-end of 16S ribosomal RNA. The sequence is that of Small ribosomal subunit protein uS17 from Ligilactobacillus salivarius (strain UCC118) (Lactobacillus salivarius).